The following is a 928-amino-acid chain: MORC family CW-type zinc finger protein 4 (928 aa).

The CW-type zinc finger occupies 417-469 (RIPDQTWVQCDECLKWRRLPGMVDPSTLPARWFCYYNPHPKFKRCSVPEEQER). Positions 426, 429, 450, and 461 each coordinate Zn(2+). Disordered regions lie at residues 474-510 (LHRS…TPPL), 527-546 (NSPS…PRLK), 599-649 (AYPE…DQDQ), and 718-766 (RAES…LKRT). Residues 485–497 (AAEKKQKPMESDK) are compositionally biased toward basic and acidic residues. 3 stretches are compositionally biased toward basic and acidic residues: residues 626-636 (ESNKHTEENRE), 739-748 (KGKDCQDSRS), and 756-766 (TPKESEELKRT). Residues 758-867 (KESEELKRTT…LEVLQKAQVS (110 aa)) are a coiled coil.

Its subcellular location is the nucleus. Its function is as follows. Histone methylation reader which binds to non-methylated (H3K4me0), monomethylated (H3K4me1), dimethylated (H3K4me2) and trimethylated (H3K4me3) 'Lys-4' on histone H3. The order of binding preference is H3K4me3 &gt; H3K4me2 &gt; H3K4me1 &gt; H3K4me0. This is MORC family CW-type zinc finger protein 4 (Morc4) from Mus musculus (Mouse).